The primary structure comprises 325 residues: Putative [LysW]-lysine/[LysW]-ornithine hydrolase (325 aa).

Position 66 (histidine 66) interacts with Zn(2+). The active site involves aspartate 68. Aspartate 90 provides a ligand contact to Zn(2+). Catalysis depends on glutamate 117, which acts as the Proton acceptor. Zn(2+) is bound by residues glutamate 118, glutamate 139, and histidine 297.

The protein belongs to the peptidase M20A family. LysK subfamily. Zn(2+) is required as a cofactor. Co(2+) serves as cofactor.

It localises to the cytoplasm. The enzyme catalyses [amino-group carrier protein]-C-terminal-gamma-(L-lysyl)-L-glutamate + H2O = [amino-group carrier protein]-C-terminal-L-glutamate + L-lysine. It carries out the reaction [amino-group carrier protein]-C-terminal-gamma-(L-ornithyl)-L-glutamate + H2O = [amino-group carrier protein]-C-terminal-L-glutamate + L-ornithine. The protein operates within amino-acid biosynthesis; L-lysine biosynthesis via AAA pathway; L-lysine from L-alpha-aminoadipate (Thermus route): step 5/5. Its pathway is amino-acid biosynthesis; L-arginine biosynthesis. Its function is as follows. Catalyzes the release of L-lysine from [LysW]-gamma-L-lysine and the release of L-ornithine from [LysW]-L-ornithine. The sequence is that of Putative [LysW]-lysine/[LysW]-ornithine hydrolase from Pyrococcus horikoshii (strain ATCC 700860 / DSM 12428 / JCM 9974 / NBRC 100139 / OT-3).